The primary structure comprises 190 residues: ATP synthase subunit b (190 aa).

The chain crosses the membrane as a helical span at residues 24-44 (IVGSLICFVVILFFFWKLVLP).

It belongs to the ATPase B chain family. F-type ATPases have 2 components, F(1) - the catalytic core - and F(0) - the membrane proton channel. F(1) has five subunits: alpha(3), beta(3), gamma(1), delta(1), epsilon(1). F(0) has three main subunits: a(1), b(2) and c(10-14). The alpha and beta chains form an alternating ring which encloses part of the gamma chain. F(1) is attached to F(0) by a central stalk formed by the gamma and epsilon chains, while a peripheral stalk is formed by the delta and b chains.

It localises to the cell membrane. Its function is as follows. F(1)F(0) ATP synthase produces ATP from ADP in the presence of a proton or sodium gradient. F-type ATPases consist of two structural domains, F(1) containing the extramembraneous catalytic core and F(0) containing the membrane proton channel, linked together by a central stalk and a peripheral stalk. During catalysis, ATP synthesis in the catalytic domain of F(1) is coupled via a rotary mechanism of the central stalk subunits to proton translocation. In terms of biological role, component of the F(0) channel, it forms part of the peripheral stalk, linking F(1) to F(0). The chain is ATP synthase subunit b from Leifsonia xyli subsp. xyli (strain CTCB07).